Reading from the N-terminus, the 588-residue chain is uncharacterized protein (588 aa).

7 consecutive transmembrane segments (helical) span residues 14 to 34, 49 to 69, 78 to 98, 184 to 204, 235 to 255, 257 to 274, and 275 to 292; these read FLLFLPYFIGLLFLGFIKGIV, AVILSLLPVHIVWTFYSIVSA, IFLCLCLPAAIILWPIVGILG, ALVVSVLGILVDPPVISLVAI, VPIAGLAILLWPLAVTGAVIG, VISSIFLGAYAGVVSYQE, and SSFYYGLCYIVASVSIYD. A Phosphoserine modification is found at Ser486. A disordered region spans residues 566-588; the sequence is RKGSVNGSDQESQKGVSRNVDIV. The span at 570 to 581 shows a compositional bias: polar residues; it reads VNGSDQESQKGV.

It localises to the membrane. This is an uncharacterized protein from Arabidopsis thaliana (Mouse-ear cress).